Here is a 301-residue protein sequence, read N- to C-terminus: MNVTLRPPLAAAPRRPDGAGSVQVQMDPNLVIGTARVFSVYGKGGIGKSTTSSNLSVALSKLGKRVLQIGCDPKHDSTFTLTKRLVPTVIDILEQVNFHSEELRPDDFVYQGYNGVMCVEAGGPPAGTGCGGYVVGQTVKLLKEHHLLDDTDVVIFDVLGDVVCGGFASPLQHADRALIVAANDFDSIFAMNRIVAAIQAKSRNYPVRLGGVIANRSAATDQIDKFNERIGMKTLAHFPDLDVIRKSRLKKCTLFEMEPSPDVERAQNEYLRLAASLLAGVEPIHAVPLKDRDIFDLLGFD.

The segment covering 1–13 (MNVTLRPPLAAAP) has biased composition (low complexity). Positions 1–22 (MNVTLRPPLAAAPRRPDGAGSV) are disordered. ATP-binding positions include 45–50 (GIGKST) and K74. S49 provides a ligand contact to Mg(2+). The [4Fe-4S] cluster site is built by C130 and C164. ATP is bound by residues 215–216 (NR) and 239–241 (PDL).

The protein belongs to the NifH/BchL/ChlL family. As to quaternary structure, homodimer. Protochlorophyllide reductase is composed of three subunits; BchL, BchN and BchB. It depends on [4Fe-4S] cluster as a cofactor.

It carries out the reaction chlorophyllide a + oxidized 2[4Fe-4S]-[ferredoxin] + 2 ADP + 2 phosphate = protochlorophyllide a + reduced 2[4Fe-4S]-[ferredoxin] + 2 ATP + 2 H2O. Its pathway is porphyrin-containing compound metabolism; bacteriochlorophyll biosynthesis (light-independent). Component of the dark-operative protochlorophyllide reductase (DPOR) that uses Mg-ATP and reduced ferredoxin to reduce ring D of protochlorophyllide (Pchlide) to form chlorophyllide a (Chlide). This reaction is light-independent. The L component serves as a unique electron donor to the NB-component of the complex, and binds Mg-ATP. This is Light-independent protochlorophyllide reductase iron-sulfur ATP-binding protein from Bradyrhizobium sp. (strain ORS 278).